A 463-amino-acid chain; its full sequence is MMITLILFTVGMATTTLLIPSNKLWAGAIFQSALLSLLSLIVLNNHWTASWHNLSSILASDTISAPLIILSCWLAPIALIASKGQLNNSSDLGSRVFIIMIIVITGALIITFSSLELILFYIVVETTLIPTLILITRWGAQMERCQAGLYFMFYTLFGSLPLLIAIIAIYISSSSLSIPNVNLLWANDGSIESLTMWWALSINCFFNNLPVYGFHLWLPKAHVEAPVAGSMILAAILLKIGGYGLMRLIALFSTISMNALSLALIVFCTWGALITSVICVRQTDLKALIAYSSVGHMSIVAAAIFSETSWGMNGALMLMVAHGLVSSALFSLANTVYERSGTRTLAITRGLKLLLPLSTLWWLLMCAANLGLPPSPNLIGEILILSSLISWSVWLFPIVGFAQVFGAIYSLMIFQLSQQGTPFTSIINVFSSFSREHLFAALHILPLILIMINPFSALIAWLK.

A run of 13 helical transmembrane segments spans residues 24–44, 62–82, 98–118, 119–139, 151–171, 198–218, 232–252, 260–280, 285–305, 310–330, 353–373, 404–424, and 442–462; these read LWAG…IVLN, TISA…LIAS, IIMI…LELI, LFYI…TRWG, FMFY…AIYI, WALS…HLWL, ILAA…IALF, LSLA…VICV, LKAL…AAIF, WGMN…SALF, LLLP…LGLP, VFGA…TPFT, and LHIL…IAWL.

This sequence belongs to the complex I subunit 4 family.

It is found in the mitochondrion membrane. It carries out the reaction a ubiquinone + NADH + 5 H(+)(in) = a ubiquinol + NAD(+) + 4 H(+)(out). Functionally, core subunit of the mitochondrial membrane respiratory chain NADH dehydrogenase (Complex I) that is believed to belong to the minimal assembly required for catalysis. Complex I functions in the transfer of electrons from NADH to the respiratory chain. The immediate electron acceptor for the enzyme is believed to be ubiquinone. This Strongylocentrotus purpuratus (Purple sea urchin) protein is NADH-ubiquinone oxidoreductase chain 4 (ND4).